We begin with the raw amino-acid sequence, 96 residues long: Large ribosomal subunit protein bL28 (96 aa).

Belongs to the bacterial ribosomal protein bL28 family.

The sequence is that of Large ribosomal subunit protein bL28 from Agrobacterium fabrum (strain C58 / ATCC 33970) (Agrobacterium tumefaciens (strain C58)).